We begin with the raw amino-acid sequence, 342 residues long: Trans-3-hydroxy-L-proline dehydratase (342 aa).

Ser-90 acts as the Proton acceptor in catalysis. Residues 91–92, Asp-252, and 257–258 each bind substrate; these read GS and GT.

It belongs to the proline racemase family.

The catalysed reaction is trans-3-hydroxy-L-proline = 1-pyrroline-2-carboxylate + H2O. In terms of biological role, catalyzes the dehydration of trans-3-hydroxy-L-proline (t3LHyp) to Delta(1)-pyrroline-2-carboxylate (Pyr2C). Can also catalyze the epimerization of trans-4-hydroxy-L-proline (t4LHyp) to cis-4-hydroxy-D-proline (c4DHyp), albeit with 150-fold lower efficiency. May be involved in the degradation pathway that converts t3LHyp to L-proline, which would allow R.meliloti to grow on t3LHyp as a sole carbon source. Displays no proline racemase activity. This chain is Trans-3-hydroxy-L-proline dehydratase, found in Rhizobium meliloti (strain 1021) (Ensifer meliloti).